The sequence spans 228 residues: UPF0758 protein CKR_0778 (228 aa).

In terms of domain architecture, MPN spans 106–228 (RICSPQDAAV…FISLKEKGIL (123 aa)). Zn(2+) is bound by residues His-177, His-179, and Asp-190. Residues 177 to 190 (HNHPSGDPSPSNED) carry the JAMM motif motif.

This sequence belongs to the UPF0758 family.

The sequence is that of UPF0758 protein CKR_0778 from Clostridium kluyveri (strain NBRC 12016).